The primary structure comprises 478 residues: ATP synthase subunit beta (478 aa).

161–168 (GGAGVGKT) serves as a coordination point for ATP.

This sequence belongs to the ATPase alpha/beta chains family. In terms of assembly, F-type ATPases have 2 components, CF(1) - the catalytic core - and CF(0) - the membrane proton channel. CF(1) has five subunits: alpha(3), beta(3), gamma(1), delta(1), epsilon(1). CF(0) has four main subunits: a(1), b(1), b'(1) and c(9-12).

The protein localises to the cell inner membrane. The enzyme catalyses ATP + H2O + 4 H(+)(in) = ADP + phosphate + 5 H(+)(out). Produces ATP from ADP in the presence of a proton gradient across the membrane. The catalytic sites are hosted primarily by the beta subunits. In Gloeobacter violaceus (strain ATCC 29082 / PCC 7421), this protein is ATP synthase subunit beta.